The following is a 360-amino-acid chain: F-box protein SKP2A (360 aa).

The 47-residue stretch at Ile-25–Leu-71 folds into the F-box domain. (indol-3-yl)acetate is bound by residues Ser-127–Leu-128, Asn-149–Gly-152, Asn-175–Gly-178, and Asn-202.

In terms of assembly, part of a SCF (ASK-cullin-F-box) protein ligase complex. Interacts with CUL1 (RUB1-modified and non-modified isoforms), SKP1A, SKP1B and ASK18. Recruit DPB and phosphorylated E2FC. Interacts with auxin. Auxin controls the interaction with DPB. Polyubiquitinated and subsequently targeted to proteasome. Auxin promotes this ubiquitination-mediated degradation. As to expression, expressed in embryo, seedlings, hypocotyl, roots, leaves and flowers.

It localises to the nucleus. The protein operates within protein modification; protein ubiquitination. In terms of biological role, component of SCF(SKP2A) E3 ubiquitin ligase complexes, which mediate the ubiquitination and subsequent proteasomal degradation of target proteins (including cell cycle repressors). Acts as an auxin receptor; one active auxin is indole-3-acetate. Regulates the stability of the transcription factors E2FC and DPB, repressors of cell proliferation. Confers increase tolerance to osmotic stress by promoting cell division, especially in meristems. Promotes the formation of lateral root primordia. The sequence is that of F-box protein SKP2A (SKP2A) from Arabidopsis thaliana (Mouse-ear cress).